The chain runs to 186 residues: Holliday junction branch migration complex subunit RuvA (186 aa).

The interval 1–61 (MYRYIKGIVT…EDIFQLYGFK (61 aa)) is domain I. The interval 62–134 (DEETLNLFLK…LKGKLVNDEL (73 aa)) is domain II. Residues 134–137 (LDMQ) form a flexible linker region. Residues 138-186 (LLSDNSKDVAAALEALGYNKKEIAKSLKHVNFDQDLNKALKEALAILLK) form a domain III region.

This sequence belongs to the RuvA family. In terms of assembly, homotetramer. Forms an RuvA(8)-RuvB(12)-Holliday junction (HJ) complex. HJ DNA is sandwiched between 2 RuvA tetramers; dsDNA enters through RuvA and exits via RuvB. An RuvB hexamer assembles on each DNA strand where it exits the tetramer. Each RuvB hexamer is contacted by two RuvA subunits (via domain III) on 2 adjacent RuvB subunits; this complex drives branch migration. In the full resolvosome a probable DNA-RuvA(4)-RuvB(12)-RuvC(2) complex forms which resolves the HJ.

It is found in the cytoplasm. Functionally, the RuvA-RuvB-RuvC complex processes Holliday junction (HJ) DNA during genetic recombination and DNA repair, while the RuvA-RuvB complex plays an important role in the rescue of blocked DNA replication forks via replication fork reversal (RFR). RuvA specifically binds to HJ cruciform DNA, conferring on it an open structure. The RuvB hexamer acts as an ATP-dependent pump, pulling dsDNA into and through the RuvAB complex. HJ branch migration allows RuvC to scan DNA until it finds its consensus sequence, where it cleaves and resolves the cruciform DNA. The polypeptide is Holliday junction branch migration complex subunit RuvA (Acholeplasma laidlawii (strain PG-8A)).